Consider the following 360-residue polypeptide: Peptide chain release factor 1 (360 aa).

Gln-235 carries the post-translational modification N5-methylglutamine.

This sequence belongs to the prokaryotic/mitochondrial release factor family. In terms of processing, methylated by PrmC. Methylation increases the termination efficiency of RF1.

Its subcellular location is the cytoplasm. Its function is as follows. Peptide chain release factor 1 directs the termination of translation in response to the peptide chain termination codons UAG and UAA. This chain is Peptide chain release factor 1, found in Paraburkholderia phymatum (strain DSM 17167 / CIP 108236 / LMG 21445 / STM815) (Burkholderia phymatum).